A 341-amino-acid chain; its full sequence is N-acetyl-gamma-glutamyl-phosphate reductase (341 aa).

C145 is an active-site residue.

Belongs to the NAGSA dehydrogenase family. Type 1 subfamily.

It localises to the cytoplasm. It carries out the reaction N-acetyl-L-glutamate 5-semialdehyde + phosphate + NADP(+) = N-acetyl-L-glutamyl 5-phosphate + NADPH + H(+). It functions in the pathway amino-acid biosynthesis; L-arginine biosynthesis; N(2)-acetyl-L-ornithine from L-glutamate: step 3/4. Catalyzes the NADPH-dependent reduction of N-acetyl-5-glutamyl phosphate to yield N-acetyl-L-glutamate 5-semialdehyde. This chain is N-acetyl-gamma-glutamyl-phosphate reductase, found in Methanothrix thermoacetophila (strain DSM 6194 / JCM 14653 / NBRC 101360 / PT) (Methanosaeta thermophila).